Reading from the N-terminus, the 681-residue chain is T-box brain protein 1 (681 aa).

2 disordered regions span residues 43–83 (TDNL…RSKL) and 108–127 (SQSS…FPYP). Residues 58–68 (GMTNQSDTDNF) are compositionally biased toward polar residues. The segment covering 108–122 (SQSSQPQSAATAPSA) has biased composition (low complexity). The T-box DNA-binding region spans 213–393 (LWLKFHRHQT…HNPFAKGFRD (181 aa)). Residue threonine 408 is modified to Phosphothreonine. Serine 410 is subject to Phosphoserine. The disordered stretch occupies residues 447–483 (PGAGAGPGPGTDRSVPHTNGLLSPQQAEDPGAPSPQR). A compositionally biased stretch (polar residues) spans 462–472 (PHTNGLLSPQQ). The residue at position 594 (serine 594) is a Phosphoserine. The disordered stretch occupies residues 597–655 (APAAEDAKPKDLSDSSWIETPSSIKSIDSSDSGIYEQAKRRRISPADTPVSESSSPLKS). Over residues 618 to 628 (SSIKSIDSSDS) the composition is skewed to low complexity. Serine 640 bears the Phosphoserine mark.

Homodimer. Part of a complex containing CASK, TBR1 and TSPYL2; may modulate gene expression in response to neuronal synaptic activity. Forms homodimers. Interacts with FOXP2. Interacts with FOXP1. Interacts with BCL11A. In terms of tissue distribution, expressed in the developing and adult cortex. Expressed in the olfactory bulbs.

The protein localises to the nucleus. Its function is as follows. Transcriptional repressor involved in multiple aspects of cortical development, including neuronal migration, laminar and areal identity, and axonal projection. As transcriptional repressor of FEZF2, it blocks the formation of the corticospinal (CS) tract from layer 6 projection neurons, thereby restricting the origin of CS axons specifically to layer 5 neurons. This is T-box brain protein 1 (Tbr1) from Mus musculus (Mouse).